The following is a 146-amino-acid chain: Acidic phospholipase A2 CM-II (146 aa).

An N-terminal signal peptide occupies residues 1–21 (MNPAHLLILAAVCVSPLGAFS). The propeptide occupies 22 to 27 (NRPMPL). 7 disulfides stabilise this stretch: cysteine 38–cysteine 98, cysteine 53–cysteine 145, cysteine 55–cysteine 71, cysteine 70–cysteine 126, cysteine 77–cysteine 119, cysteine 87–cysteine 112, and cysteine 105–cysteine 117. Ca(2+) contacts are provided by tyrosine 54, glycine 56, and glycine 58. The active site involves histidine 74. Aspartate 75 provides a ligand contact to Ca(2+). Aspartate 120 is a catalytic residue.

This sequence belongs to the phospholipase A2 family. Group I subfamily. D49 sub-subfamily. Requires Ca(2+) as cofactor. In terms of tissue distribution, expressed by the venom gland.

The protein localises to the secreted. It catalyses the reaction a 1,2-diacyl-sn-glycero-3-phosphocholine + H2O = a 1-acyl-sn-glycero-3-phosphocholine + a fatty acid + H(+). PLA2 catalyzes the calcium-dependent hydrolysis of the 2-acyl groups in 3-sn-phosphoglycerides. Is able to suppress the acetylcholine (ACh)-evoked current mediated by alpha-7 (CHRNA7)-similar nAChRs in L.stagnalis neurons (IC(50)=37 nM) and to compete with alpha-bungarotoxin for binding to muscle- and alpha-7 neuronal nAChR types, as well as to AChBPs. In inhibition of alpha-bungarotoxin binding, this toxin is similarly active against T.californica nAChR (IC(50)=1.2 uM), human alpha-7 nAChR (IC(50)=3.2 uM), and L.stagnalis AChBP (IC(50)=1.0 uM), whereas it is not active against A.californica AChBP (IC(50)&gt;100 uM). This Naja kaouthia (Monocled cobra) protein is Acidic phospholipase A2 CM-II.